The sequence spans 300 residues: UDP-N-acetylenolpyruvoylglucosamine reductase (300 aa).

The region spanning 28-193 is the FAD-binding PCMH-type domain; the sequence is KTGGPADVLA…LQATFALEKG (166 aa). Residue Arg-172 is part of the active site. The active-site Proton donor is the Ser-222. Glu-292 is a catalytic residue.

It belongs to the MurB family. It depends on FAD as a cofactor.

Its subcellular location is the cytoplasm. It catalyses the reaction UDP-N-acetyl-alpha-D-muramate + NADP(+) = UDP-N-acetyl-3-O-(1-carboxyvinyl)-alpha-D-glucosamine + NADPH + H(+). It functions in the pathway cell wall biogenesis; peptidoglycan biosynthesis. Its function is as follows. Cell wall formation. This is UDP-N-acetylenolpyruvoylglucosamine reductase from Enterococcus faecalis (strain ATCC 700802 / V583).